Here is a 209-residue protein sequence, read N- to C-terminus: Tumor suppressor candidate gene 1 protein (209 aa).

Disordered regions lie at residues 1-55 (MWRM…DGAR), 111-157 (ALRL…LRAR), and 172-209 (LHLE…GPWL). Residues 14 to 47 (CCGGDGAADGRGPGRSGRARGGGSPSGGGGGVGW) are compositionally biased toward gly residues. Positions 70–114 (LEAIRARDEWDRQNARLRQENARLRLENRRLKRENRSLFRQALRL) form a coiled coil. Over residues 125–149 (EARRVPEEASTNRRARDSGREDEPG) the composition is skewed to basic and acidic residues. Position 150 is a phosphoserine (Ser150). The stretch at 152-177 (RALRARLEKLEAMYRRALLQLHLEQR) forms a coiled coil. Over residues 174 to 188 (LEQRGPRPSGDKEEQ) the composition is skewed to basic and acidic residues.

As to expression, widely expressed at low level. Expressed at higher level in testis, weakly expressed in muscle, colon, lung and spleen. Not detected in 3 non small cell lung carcinoma (NSCLC) cell lines with homozygous deletion of the 9p region, while it is down-regulated in 3 other tumor cell lines.

The protein is Tumor suppressor candidate gene 1 protein (TUSC1) of Homo sapiens (Human).